We begin with the raw amino-acid sequence, 151 residues long: 3-hydroxyacyl-thioester dehydratase Z (151 aa).

In terms of domain architecture, MaoC-like spans alanine 11–valine 131. Substrate is bound by residues isoleucine 60–glycine 63, alanine 86–tyrosine 89, proline 97–proline 99, glutamine 124, and arginine 148.

The protein belongs to the enoyl-CoA hydratase/isomerase family. In terms of assembly, homodimer.

The catalysed reaction is a (3R)-3-hydroxyacyl-CoA = a (2E)-enoyl-CoA + H2O. In terms of biological role, shows trans-enoyl-CoA hydratase/3-hydroxyacyl-CoA dehydratase activity. The sequence is that of 3-hydroxyacyl-thioester dehydratase Z from Mycobacterium bovis (strain ATCC BAA-935 / AF2122/97).